A 269-amino-acid chain; its full sequence is Surfeit locus protein 4 (269 aa).

The next 5 membrane-spanning stretches (helical) occupy residues 64–84 (LLASSFVFLNLLGQLTGCVLV), 92–112 (YACFGLFGIIALQTIAYSILW), 179–199 (FFSIVQNIVGTALMILVAIGF), 203–223 (LAALTLVVWLFAINVYFNAFW), and 239–259 (FFQTMSVIGGLLLVVALGPGG). The short motif at 266 to 269 (KKEW) is the Di-lysine motif element.

Belongs to the SURF4 family. As to quaternary structure, found in a complex composed at least of SURF4, TMED2 and TMED10. May interact with LMAN1. Interacts with ZFYVE27 and with KIF5A in a ZFYVE27-dependent manner. Interacts with STING1. Interacts with SAR1B. Interacts with TMEM41B.

The protein resides in the endoplasmic reticulum membrane. Its subcellular location is the endoplasmic reticulum-Golgi intermediate compartment membrane. It is found in the golgi apparatus membrane. In terms of biological role, endoplasmic reticulum cargo receptor that mediates the export of lipoproteins by recruiting cargos into COPII vesicles to facilitate their secretion. Acts as a cargo receptor for lipoproteins bearing both APOB and APOA1, thereby regulating lipoprotein delivery and the maintenance of lipid homeostasis. Synergizes with the GTPase SAR1B to mediate transport of circulating lipoproteins. Promotes the secretion of PCSK9. Also mediates the efficient secretion of erythropoietin (EPO). May also play a role in the maintenance of the architecture of the endoplasmic reticulum-Golgi intermediate compartment and of the Golgi. The polypeptide is Surfeit locus protein 4 (Homo sapiens (Human)).